The chain runs to 191 residues: Glutathione-dependent formaldehyde-activating enzyme (191 aa).

Residues 22–169 (FAGGTLQCLC…LTELGLTPYD (148 aa)) enclose the CENP-V/GFA domain. Zn(2+) contacts are provided by C29, C31, C50, C52, C55, C97, and C100.

Belongs to the Gfa family. Zn(2+) is required as a cofactor.

It catalyses the reaction S-(hydroxymethyl)glutathione = glutathione + formaldehyde. It functions in the pathway one-carbon metabolism; formaldehyde degradation; formate from formaldehyde (glutathione route): step 1/3. Catalyzes the condensation of formaldehyde and glutathione to S-hydroxymethylglutathione. This chain is Glutathione-dependent formaldehyde-activating enzyme, found in Xanthomonas campestris pv. campestris (strain B100).